The primary structure comprises 40 residues: Acyl-CoA-binding protein 2 (40 aa).

The span at 1-15 shows a compositional bias: basic and acidic residues; it reads ALKEEFEEHAEKAKT. A disordered region spans residues 1-25; that stretch reads ALKEEFEEHAEKAKTLPENTSSENK. Residues 2–40 enclose the ACB domain; sequence LKEEFEEHAEKAKTLPENTSSENKLTLYGLYKQATVGNV.

This sequence belongs to the ACBP family.

The protein localises to the cytoplasm. Its function is as follows. Binds medium- and long-chain acyl-CoA esters with very high affinity and may function as an intracellular carrier of acyl-CoA esters. The sequence is that of Acyl-CoA-binding protein 2 from Digitalis lanata (Grecian foxglove).